The primary structure comprises 460 residues: Argininosuccinate lyase (460 aa).

This sequence belongs to the lyase 1 family. Argininosuccinate lyase subfamily.

It is found in the cytoplasm. The enzyme catalyses 2-(N(omega)-L-arginino)succinate = fumarate + L-arginine. It functions in the pathway amino-acid biosynthesis; L-arginine biosynthesis; L-arginine from L-ornithine and carbamoyl phosphate: step 3/3. The sequence is that of Argininosuccinate lyase from Buchnera aphidicola subsp. Cinara cedri (strain Cc).